The chain runs to 236 residues: Lipoprotein signal peptidase (236 aa).

4 helical membrane passes run 8-28 (FYGI…WVYF), 44-64 (WFKL…FGFT), 68-88 (VLLT…IWNL), and 98-118 (LLWG…DSIF). Catalysis depends on residues Asp141 and Asp174. The helical transmembrane segment at 166–186 (CLPVFNLADVAILAGVALIVL) threads the bilayer.

Belongs to the peptidase A8 family.

It localises to the cell inner membrane. It carries out the reaction Release of signal peptides from bacterial membrane prolipoproteins. Hydrolyzes -Xaa-Yaa-Zaa-|-(S,diacylglyceryl)Cys-, in which Xaa is hydrophobic (preferably Leu), and Yaa (Ala or Ser) and Zaa (Gly or Ala) have small, neutral side chains.. It functions in the pathway protein modification; lipoprotein biosynthesis (signal peptide cleavage). Functionally, this protein specifically catalyzes the removal of signal peptides from prolipoproteins. In Amoebophilus asiaticus (strain 5a2), this protein is Lipoprotein signal peptidase.